Reading from the N-terminus, the 214-residue chain is Phosphatidylserine decarboxylase proenzyme (214 aa).

The active-site Schiff-base intermediate with substrate; via pyruvic acid is serine 182. Pyruvic acid (Ser); by autocatalysis is present on serine 182.

Belongs to the phosphatidylserine decarboxylase family. PSD-A subfamily. In terms of assembly, heterodimer of a large membrane-associated beta subunit and a small pyruvoyl-containing alpha subunit. The cofactor is pyruvate. Post-translationally, is synthesized initially as an inactive proenzyme. Formation of the active enzyme involves a self-maturation process in which the active site pyruvoyl group is generated from an internal serine residue via an autocatalytic post-translational modification. Two non-identical subunits are generated from the proenzyme in this reaction, and the pyruvate is formed at the N-terminus of the alpha chain, which is derived from the carboxyl end of the proenzyme. The post-translation cleavage follows an unusual pathway, termed non-hydrolytic serinolysis, in which the side chain hydroxyl group of the serine supplies its oxygen atom to form the C-terminus of the beta chain, while the remainder of the serine residue undergoes an oxidative deamination to produce ammonia and the pyruvoyl prosthetic group on the alpha chain.

The protein resides in the cell membrane. The catalysed reaction is a 1,2-diacyl-sn-glycero-3-phospho-L-serine + H(+) = a 1,2-diacyl-sn-glycero-3-phosphoethanolamine + CO2. Its pathway is phospholipid metabolism; phosphatidylethanolamine biosynthesis; phosphatidylethanolamine from CDP-diacylglycerol: step 2/2. Its function is as follows. Catalyzes the formation of phosphatidylethanolamine (PtdEtn) from phosphatidylserine (PtdSer). This Burkholderia lata (strain ATCC 17760 / DSM 23089 / LMG 22485 / NCIMB 9086 / R18194 / 383) protein is Phosphatidylserine decarboxylase proenzyme.